Reading from the N-terminus, the 212-residue chain is Pyridoxine/pyridoxamine 5'-phosphate oxidase (212 aa).

Residues 7–10 (RREY) and Lys-65 contribute to the substrate site. FMN-binding positions include 60–65 (RIVLLK), 75–76 (FT), Arg-81, Lys-82, and Gln-104. 3 residues coordinate substrate: Tyr-122, Arg-126, and Ser-130. Residues 139–140 (QS) and Trp-184 each bind FMN. 190-192 (RLH) is a substrate binding site. FMN is bound at residue Arg-194.

Belongs to the pyridoxamine 5'-phosphate oxidase family. As to quaternary structure, homodimer. Requires FMN as cofactor.

It carries out the reaction pyridoxamine 5'-phosphate + O2 + H2O = pyridoxal 5'-phosphate + H2O2 + NH4(+). It catalyses the reaction pyridoxine 5'-phosphate + O2 = pyridoxal 5'-phosphate + H2O2. Its pathway is cofactor metabolism; pyridoxal 5'-phosphate salvage; pyridoxal 5'-phosphate from pyridoxamine 5'-phosphate: step 1/1. The protein operates within cofactor metabolism; pyridoxal 5'-phosphate salvage; pyridoxal 5'-phosphate from pyridoxine 5'-phosphate: step 1/1. In terms of biological role, catalyzes the oxidation of either pyridoxine 5'-phosphate (PNP) or pyridoxamine 5'-phosphate (PMP) into pyridoxal 5'-phosphate (PLP). In Pseudoalteromonas translucida (strain TAC 125), this protein is Pyridoxine/pyridoxamine 5'-phosphate oxidase.